Here is a 343-residue protein sequence, read N- to C-terminus: N-acetyl-gamma-glutamyl-phosphate reductase (343 aa).

The active site involves C147.

Belongs to the NAGSA dehydrogenase family. Type 1 subfamily.

It is found in the cytoplasm. The enzyme catalyses N-acetyl-L-glutamate 5-semialdehyde + phosphate + NADP(+) = N-acetyl-L-glutamyl 5-phosphate + NADPH + H(+). It functions in the pathway amino-acid biosynthesis; L-arginine biosynthesis; N(2)-acetyl-L-ornithine from L-glutamate: step 3/4. Its function is as follows. Catalyzes the NADPH-dependent reduction of N-acetyl-5-glutamyl phosphate to yield N-acetyl-L-glutamate 5-semialdehyde. This is N-acetyl-gamma-glutamyl-phosphate reductase from Listeria monocytogenes serotype 4b (strain F2365).